The chain runs to 229 residues: UPF0128 protein aq_756 (229 aa).

The protein belongs to the UPF0128 family.

This is UPF0128 protein aq_756 from Aquifex aeolicus (strain VF5).